Reading from the N-terminus, the 492-residue chain is Putative transporter SVOPL (492 aa).

Helical transmembrane passes span 48 to 68 (IALF…IMLI), 86 to 106 (VALV…LFGL), 121 to 141 (FLWG…IWFV), 179 to 199 (VFWL…IPTI), 203 to 223 (WLIR…KFIP), 281 to 301 (TLQI…VILA), 348 to 368 (IIST…INFL), 383 to 403 (LFFL…FLFM), 429 to 449 (ALGM…APFI), and 458 to 478 (ILGA…SAFT).

Belongs to the major facilitator superfamily.

It is found in the membrane. The polypeptide is Putative transporter SVOPL (SVOPL) (Homo sapiens (Human)).